Reading from the N-terminus, the 89-residue chain is Small ribosomal subunit protein uS15c (89 aa).

It belongs to the universal ribosomal protein uS15 family. In terms of assembly, part of the 30S ribosomal subunit.

The protein resides in the plastid. It is found in the chloroplast. This chain is Small ribosomal subunit protein uS15c (rps15), found in Chloranthus spicatus (Chulantree).